Consider the following 278-residue polypeptide: Formyltetrahydrofolate deformylase (278 aa).

The ACT domain occupies 6-85 (ILLTDCPDDK…RLIGTQRKRI (80 aa)). Asp223 is a catalytic residue.

This sequence belongs to the PurU family.

It catalyses the reaction (6R)-10-formyltetrahydrofolate + H2O = (6S)-5,6,7,8-tetrahydrofolate + formate + H(+). The protein operates within purine metabolism; IMP biosynthesis via de novo pathway; formate from 10-formyl-5,6,7,8-tetrahydrofolate: step 1/1. Catalyzes the hydrolysis of 10-formyltetrahydrofolate (formyl-FH4) to formate and tetrahydrofolate (FH4). The chain is Formyltetrahydrofolate deformylase from Haemophilus influenzae (strain ATCC 51907 / DSM 11121 / KW20 / Rd).